A 494-amino-acid chain; its full sequence is MLELPIISITIFLPLISVLYILLFINQSKKANKLNIYVAMVAMLSSVLTFILTIYILIEFDASNHTYQFVERYTWLDKIGLEFHVGIDGIAIFFVVLTSFLTLICIIGSIFTIKKYIKEYLVCFLLMESFCIGAFTAVNLLLFYLFFEAILVPMYIIIGVWGGDNRIYAALKFFLYTFFGSVFFLLALIYIYSKIHSFDLTYILALTENIPLFAQKILWWTIFIAFAVKIPMIPFHTWLPDAHVQAPTSGSVILAGILLKLGSYGFLRVLLPLLPNVSQEFAIYVIYLSVIAIIYSSLVALAQKDIKQMIAYSSIAHMGYVTIGIFSFTETGISGAIFQMLSHGVVSSSLFLIVGTLYERLHTKEIAKYGGVASKMPVLATFFMITMLSSIGLPSTSGFIGEFLSLLGIYKVNVVAACIAALGIILGAVYMLKLYKEVMLGEITNTEIKHFKDLYRYEILSIAPLILIIIYFGLMPNSILNVFHLSVENLLIKF.

The next 14 membrane-spanning stretches (helical) occupy residues 5–25 (PIIS…LLFI), 36–58 (IYVA…YILI), 90–110 (IAIF…IGSI), 119–139 (EYLV…TAVN), 140–160 (LLLF…IIGV), 173–193 (FFLY…YIYS), 206–226 (LTEN…FIAF), 252–272 (VILA…VLLP), 281–301 (FAIY…LVAL), 318–338 (MGYV…GAIF), 339–359 (QMLS…TLYE), 376–396 (MPVL…LPST), 412–432 (VNVV…VYML), and 459–479 (ILSI…PNSI).

The protein belongs to the complex I subunit 4 family.

The protein localises to the cell membrane. The enzyme catalyses a quinone + NADH + 5 H(+)(in) = a quinol + NAD(+) + 4 H(+)(out). NDH-1 shuttles electrons from NADH, via FMN and iron-sulfur (Fe-S) centers, to quinones in the respiratory chain. Couples the redox reaction to proton translocation (for every two electrons transferred, four hydrogen ions are translocated across the cytoplasmic membrane), and thus conserves the redox energy in a proton gradient. In Rickettsia typhi (strain ATCC VR-144 / Wilmington), this protein is NADH-quinone oxidoreductase subunit M (nuoM).